We begin with the raw amino-acid sequence, 302 residues long: 1,2-dihydroxynaphthalene dioxygenase (302 aa).

2 consecutive VOC domains span residues 9 to 124 (ELGY…IFWG) and 149 to 270 (GLGH…PGWR). Residue His152 coordinates Fe cation. Substrate contacts are provided by residues His152, 199–200 (DH), His215, and Tyr256. His215 is a Fe cation binding site. Glu266 contacts Fe cation.

The protein belongs to the extradiol ring-cleavage dioxygenase family. It depends on Fe(2+) as a cofactor.

The enzyme catalyses naphthalene-1,2-diol + O2 = 2-hydroxychromene-2-carboxylate + H(+). Its pathway is aromatic compound metabolism; naphthalene degradation. Involved in the naphthalene catabolic pathway. Catalyzes the meta-cleavage of 1,2-dihydroxynaphthalene (1,2-DHN) to yield 2-hydroxychromene-2-carboxylic acid. This Pseudomonas putida (Arthrobacter siderocapsulatus) protein is 1,2-dihydroxynaphthalene dioxygenase (nahC).